The primary structure comprises 155 residues: uncharacterized protein (155 aa).

The N-acetyltransferase domain occupies 7 to 154 (LQINYKTLEE…VWLPESVELQ (148 aa)).

This is an uncharacterized protein from Brevibacillus brevis (strain 47 / JCM 6285 / NBRC 100599).